The sequence spans 303 residues: Recombination-associated protein RdgC (303 aa).

This sequence belongs to the RdgC family.

It is found in the cytoplasm. The protein localises to the nucleoid. Functionally, may be involved in recombination. This is Recombination-associated protein RdgC from Shewanella loihica (strain ATCC BAA-1088 / PV-4).